A 493-amino-acid polypeptide reads, in one-letter code: 3-octaprenyl-4-hydroxybenzoate carboxy-lyase (493 aa).

N172 provides a ligand contact to Mn(2+). Prenylated FMN-binding positions include 175–177, 189–191, and 194–195; these read IYR, RWL, and RG. E238 is a binding site for Mn(2+). Residue D287 is the Proton donor of the active site.

It belongs to the UbiD family. In terms of assembly, homohexamer. It depends on prenylated FMN as a cofactor. Mn(2+) is required as a cofactor.

It is found in the cell membrane. The catalysed reaction is a 4-hydroxy-3-(all-trans-polyprenyl)benzoate + H(+) = a 2-(all-trans-polyprenyl)phenol + CO2. It functions in the pathway cofactor biosynthesis; ubiquinone biosynthesis. Its function is as follows. Catalyzes the decarboxylation of 3-octaprenyl-4-hydroxy benzoate to 2-octaprenylphenol, an intermediate step in ubiquinone biosynthesis. This Shewanella sediminis (strain HAW-EB3) protein is 3-octaprenyl-4-hydroxybenzoate carboxy-lyase.